Here is a 556-residue protein sequence, read N- to C-terminus: Potassium-transporting ATPase potassium-binding subunit (556 aa).

10 consecutive transmembrane segments (helical) span residues 6–26, 65–85, 133–153, 176–196, 249–269, 283–303, 378–398, 419–439, 483–503, and 526–546; these read AGILFALSLALALAAVHVPLG, SVLAFSAVSILFLFGLQLLQG, GLSVQNFVSAAVGMAVAMAFV, LRILLPLSIIGAIILVSGGVI, PTTWTNWVEIFLLSCIAFSLP, AAILAVMAVIATLSLSLMMLF, GLYSMLVLAVITVFVAGLMVG, YFLVTPLIVLIGTAVAMALPG, ALGLAMVFGRFLPIILVLALA, and FVGMVTGVTLILVALTFLPVL.

Belongs to the KdpA family. In terms of assembly, the system is composed of three essential subunits: KdpA, KdpB and KdpC.

Its subcellular location is the cell membrane. Part of the high-affinity ATP-driven potassium transport (or Kdp) system, which catalyzes the hydrolysis of ATP coupled with the electrogenic transport of potassium into the cytoplasm. This subunit binds the extracellular potassium ions and delivers the ions to the membrane domain of KdpB through an intramembrane tunnel. This is Potassium-transporting ATPase potassium-binding subunit from Mycobacterium sp. (strain KMS).